The sequence spans 397 residues: tRNA-specific 2-thiouridylase MnmA (397 aa).

ATP is bound by residues 6-13 (AMSGGVDS) and L32. C101 acts as the Nucleophile in catalysis. C101 and C199 are disulfide-bonded. An ATP-binding site is contributed by G125. The segment at 148–150 (KDQ) is interaction with tRNA. C199 (cysteine persulfide intermediate) is an active-site residue.

This sequence belongs to the MnmA/TRMU family.

The protein resides in the cytoplasm. It catalyses the reaction S-sulfanyl-L-cysteinyl-[protein] + uridine(34) in tRNA + AH2 + ATP = 2-thiouridine(34) in tRNA + L-cysteinyl-[protein] + A + AMP + diphosphate + H(+). Functionally, catalyzes the 2-thiolation of uridine at the wobble position (U34) of tRNA, leading to the formation of s(2)U34. The chain is tRNA-specific 2-thiouridylase MnmA from Clavibacter sepedonicus (Clavibacter michiganensis subsp. sepedonicus).